Consider the following 358-residue polypeptide: C-X-C chemokine receptor type 4 (358 aa).

The interval 1–25 is important for chemokine binding and signaling; sequence MDGFSGGIDINIFDSNSTENGSGDF. Residues 1 to 44 lie on the Extracellular side of the membrane; sequence MDGFSGGIDINIFDSNSTENGSGDFEDFSEPCFMHDNSDFNRIF. Asn-16 and Asn-20 each carry an N-linked (GlcNAc...) asparagine glycan. 2 cysteine pairs are disulfide-bonded: Cys-32-Cys-281 and Cys-113-Cys-190. Residues 45–67 form a helical membrane-spanning segment; the sequence is LPTIYSFIFLLGIIGNGLVVVVM. The Cytoplasmic portion of the chain corresponds to 68–81; sequence GYQKKSRTMTDKYR. A helical transmembrane segment spans residues 82–103; that stretch reads LHLSVADLLFVFTLPFWSVDAA. The tract at residues 98–101 is chemokine binding; it reads WSVD. Residues 104 to 114 are Extracellular-facing; it reads IGWYFKEFLCK. A helical transmembrane segment spans residues 115–134; it reads AVHVIYTVNLYSSVLILAFI. The chemokine binding stretch occupies residues 117–121; the sequence is HVIYT. The Cytoplasmic portion of the chain corresponds to 135–158; it reads SLDRYLAIVHATNSQGSRKMLADK. The interval 139-151 is involved in dimerization; when bound to chemokine; it reads YLAIVHATNSQGS. Residues 159 to 178 form a helical membrane-spanning segment; it reads VVYAGVWLPALLLTVPDLVF. Over 179–202 the chain is Extracellular; it reads ARVSDENGQFVCDRIYPIDNRETW. The tract at residues 190 to 194 is chemokine binding, important for signaling; the sequence is CDRIY. Residues 203-223 traverse the membrane as a helical segment; that stretch reads TVGFRFLHITVGLILPGLIIL. The Cytoplasmic segment spans residues 224–248; it reads ICYCVIISKLSHSKGHQKRKALKTT. A helical membrane pass occupies residues 249–268; sequence VILILAFFACWLPYYVCLTT. Residues 269–289 lie on the Extracellular side of the membrane; that stretch reads DTFMLLGLLKADCIWENTLHK. A helical transmembrane segment spans residues 290 to 309; that stretch reads AISITEALAFFHCCLNPILY. The Cytoplasmic portion of the chain corresponds to 310–358; it reads AFLGAKFKTSAQNAFTSVSRGSSLKILSKKRAGLSSVSTESESSSFHSS. The interval 338 to 358 is disordered; sequence KKRAGLSSVSTESESSSFHSS. Positions 344–358 are enriched in low complexity; that stretch reads SSVSTESESSSFHSS.

The protein belongs to the G-protein coupled receptor 1 family. In terms of assembly, monomer. Can form dimers. Post-translationally, sulfation is required for efficient binding of cxcl12/sdf-1alpha and promotes its dimerization. In terms of processing, O- and N-glycosylated.

It localises to the cell membrane. The protein resides in the cytoplasm. It is found in the nucleus. The protein localises to the early endosome. Its subcellular location is the late endosome. It localises to the lysosome. Functionally, receptor for the C-X-C chemokine cxcl12/sdf-1. Transduces a signal by increasing the intracellular calcium ion level. Signaling with cxcl12/sdf-1 mediates the directional movement of mesodermal cells during gastrulation. May play a role in the migration of embryonic presumptive primordial germ cells (pPGCs). May also be involved in regulating migration of hematopoietic stem cells into the larval liver. This is C-X-C chemokine receptor type 4 from Xenopus tropicalis (Western clawed frog).